The primary structure comprises 438 residues: Glyceraldehyde-3-phosphate dehydrogenase B, chloroplastic (438 aa).

Residues 1–53 constitute a chloroplast transit peptide; sequence CLSKKFEVAEFAGLRSSGCVTFSNKESSFFDVVSAQLTPKTTRSTPVKGETVA. NADP(+) contacts are provided by residues 64–65, aspartate 88, and arginine 133; that span reads RI. D-glyceraldehyde 3-phosphate contacts are provided by residues 207–209, threonine 238, arginine 253, 266–267, and arginine 289; these read SCT and TG. Residue cysteine 208 is the Nucleophile of the active site. Asparagine 372 provides a ligand contact to NADP(+).

It belongs to the glyceraldehyde-3-phosphate dehydrogenase family. In terms of assembly, tetramer of either four A chains (GAPDH 2) or two A and two B chains (GAPDH 1).

The protein resides in the plastid. It is found in the chloroplast. It carries out the reaction D-glyceraldehyde 3-phosphate + phosphate + NADP(+) = (2R)-3-phospho-glyceroyl phosphate + NADPH + H(+). The protein operates within carbohydrate biosynthesis; Calvin cycle. The sequence is that of Glyceraldehyde-3-phosphate dehydrogenase B, chloroplastic (GAPB) from Nicotiana tabacum (Common tobacco).